A 104-amino-acid polypeptide reads, in one-letter code: L-rhamnose mutarotase (104 aa).

Tyr-18 is a substrate binding site. His-22 (proton donor) is an active-site residue. Residues Tyr-41 and 76 to 77 (WW) contribute to the substrate site.

This sequence belongs to the rhamnose mutarotase family. As to quaternary structure, homodimer.

It is found in the cytoplasm. It catalyses the reaction alpha-L-rhamnose = beta-L-rhamnose. Its pathway is carbohydrate metabolism; L-rhamnose metabolism. Involved in the anomeric conversion of L-rhamnose. This is L-rhamnose mutarotase from Shouchella clausii (strain KSM-K16) (Alkalihalobacillus clausii).